Here is a 122-residue protein sequence, read N- to C-terminus: Large ribosomal subunit protein uL14 (122 aa).

This sequence belongs to the universal ribosomal protein uL14 family. In terms of assembly, part of the 50S ribosomal subunit. Forms a cluster with proteins L3 and L19. In the 70S ribosome, L14 and L19 interact and together make contacts with the 16S rRNA in bridges B5 and B8.

Binds to 23S rRNA. Forms part of two intersubunit bridges in the 70S ribosome. In Treponema denticola (strain ATCC 35405 / DSM 14222 / CIP 103919 / JCM 8153 / KCTC 15104), this protein is Large ribosomal subunit protein uL14.